The primary structure comprises 906 residues: Protein translocase subunit SecA (906 aa).

ATP is bound by residues glutamine 86, glycine 104 to threonine 108, and aspartate 511. Basic and acidic residues-rich tracts occupy residues histidine 853–glutamate 865 and valine 877–aspartate 888. A disordered region spans residues histidine 853 to glutamate 906. The Zn(2+) site is built by cysteine 890, cysteine 892, cysteine 901, and histidine 902. The span at lysine 896–glutamate 906 shows a compositional bias: basic residues.

This sequence belongs to the SecA family. As to quaternary structure, monomer and homodimer. Part of the essential Sec protein translocation apparatus which comprises SecA, SecYEG and auxiliary proteins SecDF-YajC and YidC. Zn(2+) is required as a cofactor.

The protein resides in the cell inner membrane. It is found in the cytoplasm. The catalysed reaction is ATP + H2O + cellular proteinSide 1 = ADP + phosphate + cellular proteinSide 2.. Its function is as follows. Part of the Sec protein translocase complex. Interacts with the SecYEG preprotein conducting channel. Has a central role in coupling the hydrolysis of ATP to the transfer of proteins into and across the cell membrane, serving both as a receptor for the preprotein-SecB complex and as an ATP-driven molecular motor driving the stepwise translocation of polypeptide chains across the membrane. The sequence is that of Protein translocase subunit SecA from Francisella tularensis subsp. tularensis (strain WY96-3418).